A 484-amino-acid polypeptide reads, in one-letter code: tRNA sulfurtransferase (484 aa).

One can recognise a THUMP domain in the interval 56–158 (NCLKKALSKV…GNRAYFYTEV (103 aa)). ATP is bound by residues 176 to 177 (LV), K257, G279, and Q288. C336 and C444 are joined by a disulfide. The Rhodanese domain maps to 396-479 (APEGAVIVDL…TRNAVPPSSQ (84 aa)). C444 functions as the Cysteine persulfide intermediate in the catalytic mechanism.

The protein belongs to the ThiI family.

The protein resides in the cytoplasm. The catalysed reaction is [ThiI sulfur-carrier protein]-S-sulfanyl-L-cysteine + a uridine in tRNA + 2 reduced [2Fe-2S]-[ferredoxin] + ATP + H(+) = [ThiI sulfur-carrier protein]-L-cysteine + a 4-thiouridine in tRNA + 2 oxidized [2Fe-2S]-[ferredoxin] + AMP + diphosphate. The enzyme catalyses [ThiS sulfur-carrier protein]-C-terminal Gly-Gly-AMP + S-sulfanyl-L-cysteinyl-[cysteine desulfurase] + AH2 = [ThiS sulfur-carrier protein]-C-terminal-Gly-aminoethanethioate + L-cysteinyl-[cysteine desulfurase] + A + AMP + 2 H(+). It functions in the pathway cofactor biosynthesis; thiamine diphosphate biosynthesis. Catalyzes the ATP-dependent transfer of a sulfur to tRNA to produce 4-thiouridine in position 8 of tRNAs, which functions as a near-UV photosensor. Also catalyzes the transfer of sulfur to the sulfur carrier protein ThiS, forming ThiS-thiocarboxylate. This is a step in the synthesis of thiazole, in the thiamine biosynthesis pathway. The sulfur is donated as persulfide by IscS. This is tRNA sulfurtransferase from Pyrobaculum aerophilum (strain ATCC 51768 / DSM 7523 / JCM 9630 / CIP 104966 / NBRC 100827 / IM2).